The following is a 378-amino-acid chain: Acetylornithine deacetylase (378 aa).

Histidine 76 contacts Zn(2+). Aspartate 78 is an active-site residue. Residue aspartate 108 coordinates Zn(2+). Glutamate 140 is an active-site residue. 3 residues coordinate Zn(2+): glutamate 141, glutamate 165, and histidine 351.

The protein belongs to the peptidase M20A family. ArgE subfamily. In terms of assembly, homodimer. It depends on Zn(2+) as a cofactor. Requires Co(2+) as cofactor. Glutathione serves as cofactor.

It localises to the cytoplasm. The catalysed reaction is N(2)-acetyl-L-ornithine + H2O = L-ornithine + acetate. Its pathway is amino-acid biosynthesis; L-arginine biosynthesis; L-ornithine from N(2)-acetyl-L-ornithine (linear): step 1/1. Functionally, catalyzes the hydrolysis of the amide bond of N(2)-acetylated L-amino acids. Cleaves the acetyl group from N-acetyl-L-ornithine to form L-ornithine, an intermediate in L-arginine biosynthesis pathway, and a branchpoint in the synthesis of polyamines. The protein is Acetylornithine deacetylase of Vibrio vulnificus (strain CMCP6).